The following is a 123-amino-acid chain: Ribosome-binding factor A (123 aa).

Belongs to the RbfA family. As to quaternary structure, monomer. Binds 30S ribosomal subunits, but not 50S ribosomal subunits or 70S ribosomes.

Its subcellular location is the cytoplasm. Functionally, one of several proteins that assist in the late maturation steps of the functional core of the 30S ribosomal subunit. Associates with free 30S ribosomal subunits (but not with 30S subunits that are part of 70S ribosomes or polysomes). Required for efficient processing of 16S rRNA. May interact with the 5'-terminal helix region of 16S rRNA. This is Ribosome-binding factor A from Prochlorococcus marinus (strain NATL1A).